The primary structure comprises 123 residues: Gamma-synuclein (123 aa).

2 tandem repeats follow at residues 20–30 and 31–41. Residues 20 to 67 are 4 X 11 AA tandem repeats of [EGSA]-K-T-K-[EQ]-[GQ]-V-X(4); the sequence is EKTKQGVTEAAEKTKEGVMYVGTKTKENVVQSVTSVAEKTKEQANAVS. A 3; approximate repeat occupies 42–56; sequence TKTKENVVQSVTSVA. Repeat 4 spans residues 57–67; that stretch reads EKTKEQANAVS. Ser-67 and Ser-72 each carry phosphoserine. Positions 91–123 are disordered; it reads TTGVVRKEDLEPPAQDQEAKEQEENEEAKSGED. Over residues 107–123 the composition is skewed to basic and acidic residues; sequence QEAKEQEENEEAKSGED. Phosphoserine; by BARK1, CaMK2 and CK2 is present on Ser-120.

It belongs to the synuclein family. In terms of assembly, may be a centrosome-associated protein. Interacts with MYOC; affects its secretion and its aggregation. In terms of processing, phosphorylated. Phosphorylation by GRK5 appears to occur on residues distinct from the residue phosphorylated by other kinases. In terms of tissue distribution, highly expressed in brain, particularly in the substantia nigra. Also expressed in the corpus callosum, heart, skeletal muscle, ovary, testis, colon and spleen. Weak expression in pancreas, kidney and lung. Expressed predominantly in the cell bodies and axons of primary sensory neurons, sympathetic neurons and motoneurons.

It is found in the cytoplasm. Its subcellular location is the perinuclear region. The protein resides in the cytoskeleton. It localises to the microtubule organizing center. The protein localises to the centrosome. It is found in the spindle. Plays a role in neurofilament network integrity. May be involved in modulating axonal architecture during development and in the adult. In vitro, increases the susceptibility of neurofilament-H to calcium-dependent proteases. May also function in modulating the keratin network in skin. Activates the MAPK and Elk-1 signal transduction pathway. The chain is Gamma-synuclein (Sncg) from Mus musculus (Mouse).